Here is a 337-residue protein sequence, read N- to C-terminus: Phosphatidylglycerophosphate phosphatase PTPMT1 (337 aa).

Residues 1 to 20 form a disordered region; it reads MYIKELTETDEEKRERSVED. Substrate-binding residues include Y55 and D133. A Tyrosine-protein phosphatase domain is found at 73–220; it reads WWDRVAEFIL…VVEYYHVKVL (148 aa). Residue C164 is the Phosphocysteine intermediate of the active site. The short motif at 164–170 is the Glucan phosphatase signature motif CXAGXGR element; it reads CKAGRGR. 165-170 contacts substrate; it reads KAGRGR.

It belongs to the protein-tyrosine phosphatase family. Non-receptor class dual specificity subfamily. Expressed in stems, roots, flowers, mature seeds and leaves.

It catalyses the reaction O-phospho-L-seryl-[protein] + H2O = L-seryl-[protein] + phosphate. It carries out the reaction O-phospho-L-threonyl-[protein] + H2O = L-threonyl-[protein] + phosphate. The catalysed reaction is O-phospho-L-tyrosyl-[protein] + H2O = L-tyrosyl-[protein] + phosphate. The enzyme catalyses a 1,2-diacyl-sn-glycero-3-phospho-(1'-sn-glycero-3'-phosphate) + H2O = a 1,2-diacyl-sn-glycero-3-phospho-(1'-sn-glycerol) + phosphate. The protein operates within phospholipid metabolism; phosphatidylglycerol biosynthesis; phosphatidylglycerol from CDP-diacylglycerol: step 2/2. In terms of biological role, exhibits phosphatidylglycerophosphate phosphatase activity. Involved in root growth and columella cells organization. May possess protein phosphatase activity. In Arabidopsis thaliana (Mouse-ear cress), this protein is Phosphatidylglycerophosphate phosphatase PTPMT1.